The chain runs to 362 residues: 3-dehydroquinate synthase (362 aa).

Residues 74-79, 108-112, 132-133, Lys145, Lys154, and 172-175 each bind NAD(+); these read DGEGYK, GVIGD, TT, and TLDT. The Zn(2+) site is built by Glu187, His250, and His267.

It belongs to the sugar phosphate cyclases superfamily. Dehydroquinate synthase family. The cofactor is Co(2+). Zn(2+) is required as a cofactor. It depends on NAD(+) as a cofactor.

The protein resides in the cytoplasm. It catalyses the reaction 7-phospho-2-dehydro-3-deoxy-D-arabino-heptonate = 3-dehydroquinate + phosphate. It participates in metabolic intermediate biosynthesis; chorismate biosynthesis; chorismate from D-erythrose 4-phosphate and phosphoenolpyruvate: step 2/7. Functionally, catalyzes the conversion of 3-deoxy-D-arabino-heptulosonate 7-phosphate (DAHP) to dehydroquinate (DHQ). The chain is 3-dehydroquinate synthase from Citrifermentans bemidjiense (strain ATCC BAA-1014 / DSM 16622 / JCM 12645 / Bem) (Geobacter bemidjiensis).